Consider the following 386-residue polypeptide: Probable protein phosphatase 2C 36 (386 aa).

The PPM-type phosphatase domain maps to 60-363 (ELSVAVVQGN…DDITVIVLFI (304 aa)). D94, G95, D295, and D354 together coordinate Mn(2+).

This sequence belongs to the PP2C family. Mg(2+) is required as a cofactor. The cofactor is Mn(2+).

The enzyme catalyses O-phospho-L-seryl-[protein] + H2O = L-seryl-[protein] + phosphate. The catalysed reaction is O-phospho-L-threonyl-[protein] + H2O = L-threonyl-[protein] + phosphate. The sequence is that of Probable protein phosphatase 2C 36 from Oryza sativa subsp. japonica (Rice).